Here is a 203-residue protein sequence, read N- to C-terminus: Pyridoxine/pyridoxamine 5'-phosphate oxidase (203 aa).

FMN is bound by residues 50-55 (RMVLLK), 65-66 (YT), K71, K72, and Q94. K55 provides a ligand contact to substrate. Substrate-binding residues include Y112, R116, and S120. Residues 129-130 (QS) and W174 each bind FMN. Substrate is bound at residue 180 to 182 (RLH). Residue R184 coordinates FMN.

Belongs to the pyridoxamine 5'-phosphate oxidase family. Homodimer. FMN serves as cofactor.

It catalyses the reaction pyridoxamine 5'-phosphate + O2 + H2O = pyridoxal 5'-phosphate + H2O2 + NH4(+). The catalysed reaction is pyridoxine 5'-phosphate + O2 = pyridoxal 5'-phosphate + H2O2. Its pathway is cofactor metabolism; pyridoxal 5'-phosphate salvage; pyridoxal 5'-phosphate from pyridoxamine 5'-phosphate: step 1/1. It participates in cofactor metabolism; pyridoxal 5'-phosphate salvage; pyridoxal 5'-phosphate from pyridoxine 5'-phosphate: step 1/1. Functionally, catalyzes the oxidation of either pyridoxine 5'-phosphate (PNP) or pyridoxamine 5'-phosphate (PMP) into pyridoxal 5'-phosphate (PLP). This is Pyridoxine/pyridoxamine 5'-phosphate oxidase from Brucella canis (strain ATCC 23365 / NCTC 10854 / RM-666).